A 179-amino-acid polypeptide reads, in one-letter code: Adenine phosphoribosyltransferase (179 aa).

It belongs to the purine/pyrimidine phosphoribosyltransferase family. As to quaternary structure, homodimer.

It localises to the cytoplasm. The enzyme catalyses AMP + diphosphate = 5-phospho-alpha-D-ribose 1-diphosphate + adenine. Its pathway is purine metabolism; AMP biosynthesis via salvage pathway; AMP from adenine: step 1/1. In terms of biological role, catalyzes a salvage reaction resulting in the formation of AMP, that is energically less costly than de novo synthesis. The sequence is that of Adenine phosphoribosyltransferase from Helicobacter pylori (strain ATCC 700392 / 26695) (Campylobacter pylori).